The primary structure comprises 966 residues: Alpha-1,4 glucan phosphorylase L-1 isozyme, chloroplastic/amyloplastic (966 aa).

A chloroplast-targeting transit peptide spans 1–50 (MATANGAHLFNHYSSNSRFIHFTSRNTSSKLFLTKTSHFRRPKRCFHVNN). Lysine 812 is modified (N6-(pyridoxal phosphate)lysine).

It belongs to the glycogen phosphorylase family. Requires pyridoxal 5'-phosphate as cofactor. As to expression, tuber.

It localises to the plastid. The protein localises to the chloroplast. Its subcellular location is the amyloplast. It carries out the reaction [(1-&gt;4)-alpha-D-glucosyl](n) + phosphate = [(1-&gt;4)-alpha-D-glucosyl](n-1) + alpha-D-glucose 1-phosphate. In terms of biological role, phosphorylase is an important allosteric enzyme in carbohydrate metabolism. Enzymes from different sources differ in their regulatory mechanisms and in their natural substrates. However, all known phosphorylases share catalytic and structural properties. This chain is Alpha-1,4 glucan phosphorylase L-1 isozyme, chloroplastic/amyloplastic, found in Solanum tuberosum (Potato).